We begin with the raw amino-acid sequence, 643 residues long: Transmembrane protein 62 (643 aa).

Residues 9-29 form a helical membrane-spanning segment; it reads VVAGLAAAAVAALLLEHYGLA. Residue asparagine 180 is glycosylated (N-linked (GlcNAc...) asparagine). A run of 4 helical transmembrane segments spans residues 431–451, 484–504, 532–552, and 572–592; these read IVAR…LITF, YSVL…GEII, GIIQ…WSLL, and IIPV…SCYF.

Its subcellular location is the membrane. This is Transmembrane protein 62 (Tmem62) from Mus musculus (Mouse).